The primary structure comprises 494 residues: GTPase Der (494 aa).

2 consecutive EngA-type G domains span residues 3-166 (PVIA…MDAE) and 207-380 (IKLA…DCST). GTP contacts are provided by residues 9–16 (GRPNVGKS), 56–60 (DTGGI), 118–121 (NKTD), 213–220 (GRPNVGKS), 260–264 (DTAGV), and 325–328 (NKWD). Residues 381–465 (KRVGTSLLTR…PIRIQFKEGE (85 aa)) enclose the KH-like domain.

Belongs to the TRAFAC class TrmE-Era-EngA-EngB-Septin-like GTPase superfamily. EngA (Der) GTPase family. As to quaternary structure, associates with the 50S ribosomal subunit.

Its function is as follows. GTPase that plays an essential role in the late steps of ribosome biogenesis. The polypeptide is GTPase Der (Yersinia enterocolitica serotype O:8 / biotype 1B (strain NCTC 13174 / 8081)).